The chain runs to 113 residues: MHEMSIAEGIVQLLEEQAAAQRFERVKAVWLEIGPLAAVEVESLRFCFEAVTRGSLAEGARLEIVELPGRAWCLGCNASVAIRQRYDACPQCGSYRLQVTQGDELRVKELEVE.

His2 is a Ni(2+) binding site. Zn(2+) contacts are provided by Cys73, Cys76, Cys89, and Cys92.

This sequence belongs to the HypA/HybF family.

Involved in the maturation of [NiFe] hydrogenases. Required for nickel insertion into the metal center of the hydrogenase. The chain is Hydrogenase maturation factor HypA from Azotobacter chroococcum mcd 1.